Consider the following 314-residue polypeptide: Ferrochelatase (314 aa).

Fe cation-binding residues include H184 and E259.

It belongs to the ferrochelatase family.

Its subcellular location is the cytoplasm. It catalyses the reaction heme b + 2 H(+) = protoporphyrin IX + Fe(2+). It participates in porphyrin-containing compound metabolism; protoheme biosynthesis; protoheme from protoporphyrin-IX: step 1/1. Its function is as follows. Catalyzes the ferrous insertion into protoporphyrin IX. The protein is Ferrochelatase of Chlamydia trachomatis serovar L2 (strain ATCC VR-902B / DSM 19102 / 434/Bu).